Here is a 179-residue protein sequence, read N- to C-terminus: ATP synthase subunit delta (179 aa).

This sequence belongs to the ATPase delta chain family. In terms of assembly, F-type ATPases have 2 components, F(1) - the catalytic core - and F(0) - the membrane proton channel. F(1) has five subunits: alpha(3), beta(3), gamma(1), delta(1), epsilon(1). F(0) has three main subunits: a(1), b(2) and c(10-14). The alpha and beta chains form an alternating ring which encloses part of the gamma chain. F(1) is attached to F(0) by a central stalk formed by the gamma and epsilon chains, while a peripheral stalk is formed by the delta and b chains.

The protein localises to the cell membrane. In terms of biological role, f(1)F(0) ATP synthase produces ATP from ADP in the presence of a proton or sodium gradient. F-type ATPases consist of two structural domains, F(1) containing the extramembraneous catalytic core and F(0) containing the membrane proton channel, linked together by a central stalk and a peripheral stalk. During catalysis, ATP synthesis in the catalytic domain of F(1) is coupled via a rotary mechanism of the central stalk subunits to proton translocation. This protein is part of the stalk that links CF(0) to CF(1). It either transmits conformational changes from CF(0) to CF(1) or is implicated in proton conduction. The chain is ATP synthase subunit delta from Clostridium botulinum (strain Alaska E43 / Type E3).